Reading from the N-terminus, the 403-residue chain is 4,4'-dithiodibutanoate disulfide reductase (403 aa).

Gln103 serves as a coordination point for FMN. Residue Tyr173 is the Proton donor of the active site. 348-349 serves as a coordination point for FMN; the sequence is AR.

This sequence belongs to the NADH:flavin oxidoreductase/NADH oxidase family. FMN is required as a cofactor.

The catalysed reaction is 2 4-sulfanylbutanoate + NAD(+) = 4,4'-disulfanyldibutanoate + NADH + H(+). Its activity is regulated as follows. Inactivated by cobalt, nickel and zinc ions. Involved in the degradation of the organic disulfide 4,4'-dithiodibutyric acid (DTDB). Catalyzes the initial cleavage of DTDB into 2 molecules of 4-mercaptobutyric acid (4MB). Low activities are observed with other disulfide compounds, such as 3,3'-dithiodipropionic acid DTDP, 3,3'-thiodipropionic acid TDP and DTNB. The sequence is that of 4,4'-dithiodibutanoate disulfide reductase from Rhodococcus erythropolis (Arthrobacter picolinophilus).